The sequence spans 539 residues: Phosphoenolpyruvate carboxykinase (ATP) (539 aa).

Arg-64, Tyr-206, and Lys-212 together coordinate substrate. Residues Lys-212, His-231, and 247–255 each bind ATP; that span reads GLSGTGKTT. Mn(2+)-binding residues include Lys-212 and His-231. Asp-268 is a binding site for Mn(2+). ATP is bound by residues Glu-296, Arg-332, 448–449, and Thr-454; that span reads RI. Substrate is bound at residue Arg-332.

The protein belongs to the phosphoenolpyruvate carboxykinase (ATP) family. Monomer. Requires Mn(2+) as cofactor.

It is found in the cytoplasm. It catalyses the reaction oxaloacetate + ATP = phosphoenolpyruvate + ADP + CO2. Its pathway is carbohydrate biosynthesis; gluconeogenesis. Involved in the gluconeogenesis. Catalyzes the conversion of oxaloacetate (OAA) to phosphoenolpyruvate (PEP) through direct phosphoryl transfer between the nucleoside triphosphate and OAA. This is Phosphoenolpyruvate carboxykinase (ATP) from Erwinia tasmaniensis (strain DSM 17950 / CFBP 7177 / CIP 109463 / NCPPB 4357 / Et1/99).